A 295-amino-acid chain; its full sequence is Phosphoribosylaminoimidazole-succinocarboxamide synthase (295 aa).

The protein belongs to the SAICAR synthetase family.

It catalyses the reaction 5-amino-1-(5-phospho-D-ribosyl)imidazole-4-carboxylate + L-aspartate + ATP = (2S)-2-[5-amino-1-(5-phospho-beta-D-ribosyl)imidazole-4-carboxamido]succinate + ADP + phosphate + 2 H(+). It functions in the pathway purine metabolism; IMP biosynthesis via de novo pathway; 5-amino-1-(5-phospho-D-ribosyl)imidazole-4-carboxamide from 5-amino-1-(5-phospho-D-ribosyl)imidazole-4-carboxylate: step 1/2. The polypeptide is Phosphoribosylaminoimidazole-succinocarboxamide synthase (Halorhodospira halophila (strain DSM 244 / SL1) (Ectothiorhodospira halophila (strain DSM 244 / SL1))).